The chain runs to 199 residues: Large ribosomal subunit protein bL25 (199 aa).

Positions 1 to 21 (MNIEKTLSVQKREGYGKGPSG) are disordered.

It belongs to the bacterial ribosomal protein bL25 family. CTC subfamily. Part of the 50S ribosomal subunit; part of the 5S rRNA/L5/L18/L25 subcomplex. Contacts the 5S rRNA. Binds to the 5S rRNA independently of L5 and L18.

This is one of the proteins that binds to the 5S RNA in the ribosome where it forms part of the central protuberance. This Desulfovibrio desulfuricans (strain ATCC 27774 / DSM 6949 / MB) protein is Large ribosomal subunit protein bL25.